Reading from the N-terminus, the 137-residue chain is Nucleoside diphosphate kinase (137 aa).

ATP is bound by residues Lys9, Phe57, Arg85, Thr91, Arg102, and Asn112. His115 (pros-phosphohistidine intermediate) is an active-site residue.

Belongs to the NDK family. As to quaternary structure, homotetramer. Mg(2+) serves as cofactor.

It localises to the cytoplasm. It catalyses the reaction a 2'-deoxyribonucleoside 5'-diphosphate + ATP = a 2'-deoxyribonucleoside 5'-triphosphate + ADP. The enzyme catalyses a ribonucleoside 5'-diphosphate + ATP = a ribonucleoside 5'-triphosphate + ADP. Functionally, major role in the synthesis of nucleoside triphosphates other than ATP. The ATP gamma phosphate is transferred to the NDP beta phosphate via a ping-pong mechanism, using a phosphorylated active-site intermediate. The chain is Nucleoside diphosphate kinase from Campylobacter jejuni subsp. jejuni serotype O:2 (strain ATCC 700819 / NCTC 11168).